Here is a 112-residue protein sequence, read N- to C-terminus: ATP synthase epsilon chain (112 aa).

It belongs to the ATPase epsilon chain family. As to quaternary structure, F-type ATPases have 2 components, CF(1) - the catalytic core - and CF(0) - the membrane proton channel. CF(1) has five subunits: alpha(3), beta(3), gamma(1), delta(1), epsilon(1). CF(0) has three main subunits: a, b and c.

It localises to the cell inner membrane. Its function is as follows. Produces ATP from ADP in the presence of a proton gradient across the membrane. The protein is ATP synthase epsilon chain of Rickettsia felis (strain ATCC VR-1525 / URRWXCal2) (Rickettsia azadi).